The following is a 347-amino-acid chain: Dolichyl-diphosphooligosaccharide--protein glycosyltransferase subunit TUSC3 (347 aa).

Positions 1–41 (MGARGAPSRRRQAGRRPRYLPTGSFPFLLLLLLLCIQLGGG) are cleaved as a signal peptide. Over 42–196 (QKKKENLLAE…DVHIRVFRPP (155 aa)) the chain is Lumenal. The Thioredoxin domain maps to 59–187 (WSSRRSVFRM…LAKWIADRTD (129 aa)). An N-linked (GlcNAc...) asparagine glycan is attached at Asn-83. Cys-99 and Cys-102 are oxidised to a cystine. A helical transmembrane segment spans residues 197–217 (NYSGTIALALLVSLVGGLLYL). At 218–221 (RRNN) the chain is on the cytoplasmic side. A helical transmembrane segment spans residues 222–242 (LEFIYNKTGWAMVSLCIVFAM). Over 243 to 276 (TSGQMWNHIRGPPYAHKNPHNGQVSYIHGSSQVQ) the chain is Lumenal. The helical transmembrane segment at 277–297 (FVAESHIILVLNAAITMGMDL) threads the bilayer. Residues 298–312 (LNEAATSKGDVGKRR) are Cytoplasmic-facing. The chain crosses the membrane as a helical span at residues 313–333 (IICLVGLGLVVFFFSFLLSIF). At 334–347 (RSKYHGYPYSFLIK) the chain is on the lumenal side.

This sequence belongs to the OST3/OST6 family. As to quaternary structure, accessory component of the STT3B-containing form of the oligosaccharyltransferase (OST) complex. OST exists in two different complex forms which contain common core subunits RPN1, RPN2, OST48, OST4, DAD1 and TMEM258, either STT3A or STT3B as catalytic subunits, and form-specific accessory subunits. OST can form stable complexes with the Sec61 complex or with both the Sec61 and TRAP complexes. The association of TUSC3 or MAGT1 with the STT3B-containing complex seems to be mutually exclusvice.

Its subcellular location is the endoplasmic reticulum membrane. Its pathway is protein modification; protein glycosylation. In terms of biological role, acts as accessory component of the N-oligosaccharyl transferase (OST) complex which catalyzes the transfer of a high mannose oligosaccharide from a lipid-linked oligosaccharide donor to an asparagine residue within an Asn-X-Ser/Thr consensus motif in nascent polypeptide chains. Involved in N-glycosylation of STT3B-dependent substrates. Specifically required for the glycosylation of a subset of acceptor sites that are near cysteine residues; in this function seems to act redundantly with MAGT1. In its oxidized form proposed to form transient mixed disulfides with a glycoprotein substrate to facilitate access of STT3B to the unmodified acceptor site. Also has oxidoreductase-independent functions in the STT3B-containing OST complex possibly involving substrate recognition. Could indirectly play a role in Mg(2+) transport. This Bos taurus (Bovine) protein is Dolichyl-diphosphooligosaccharide--protein glycosyltransferase subunit TUSC3 (TUSC3).